The primary structure comprises 310 residues: uncharacterized protein (310 aa).

A coiled-coil region spans residues 269–307 (DLAELERKKSLAEIHKKAAMAKKREEKKKIKQELKKSAK). Over residues 290 to 304 (KKREEKKKIKQELKK) the composition is skewed to basic and acidic residues. The tract at residues 290 to 310 (KKREEKKKIKQELKKSAKGKK) is disordered.

This is an uncharacterized protein from Magallana gigas (Pacific oyster).